The primary structure comprises 274 residues: 2,3,4,5-tetrahydropyridine-2,6-dicarboxylate N-succinyltransferase (274 aa).

Substrate-binding residues include Arg104 and Asp141.

The protein belongs to the transferase hexapeptide repeat family. In terms of assembly, homotrimer.

Its subcellular location is the cytoplasm. It catalyses the reaction (S)-2,3,4,5-tetrahydrodipicolinate + succinyl-CoA + H2O = (S)-2-succinylamino-6-oxoheptanedioate + CoA. It functions in the pathway amino-acid biosynthesis; L-lysine biosynthesis via DAP pathway; LL-2,6-diaminopimelate from (S)-tetrahydrodipicolinate (succinylase route): step 1/3. The chain is 2,3,4,5-tetrahydropyridine-2,6-dicarboxylate N-succinyltransferase from Photorhabdus laumondii subsp. laumondii (strain DSM 15139 / CIP 105565 / TT01) (Photorhabdus luminescens subsp. laumondii).